Here is a 205-residue protein sequence, read N- to C-terminus: Small ribosomal subunit protein uS4 (205 aa).

The disordered stretch occupies residues 19–45 (IWGRPKSPVNRREYGPGQHGQRRKGKL). One can recognise an S4 RNA-binding domain in the interval 94–157 (SRLDAVVYRA…KQLAIVLEAV (64 aa)).

Belongs to the universal ribosomal protein uS4 family. As to quaternary structure, part of the 30S ribosomal subunit. Contacts protein S5. The interaction surface between S4 and S5 is involved in control of translational fidelity.

Its function is as follows. One of the primary rRNA binding proteins, it binds directly to 16S rRNA where it nucleates assembly of the body of the 30S subunit. With S5 and S12 plays an important role in translational accuracy. This chain is Small ribosomal subunit protein uS4, found in Brucella suis biovar 1 (strain 1330).